We begin with the raw amino-acid sequence, 369 residues long: uncharacterized protein (369 aa).

Residues 110 to 121 are compositionally biased toward low complexity; it reads ARPTDAFGAPIA. Residues 110 to 172 form a disordered region; that stretch reads ARPTDAFGAP…PPPPASGGGA (63 aa). The span at 122 to 136 shows a compositional bias: pro residues; it reads PSEPTPASAPSPPKA.

This is an uncharacterized protein from Lymantria dispar multicapsid nuclear polyhedrosis virus (LdMNPV).